The primary structure comprises 292 residues: ATP phosphoribosyltransferase (292 aa).

The protein belongs to the ATP phosphoribosyltransferase family. Long subfamily. Mg(2+) is required as a cofactor.

Its subcellular location is the cytoplasm. The enzyme catalyses 1-(5-phospho-beta-D-ribosyl)-ATP + diphosphate = 5-phospho-alpha-D-ribose 1-diphosphate + ATP. The protein operates within amino-acid biosynthesis; L-histidine biosynthesis; L-histidine from 5-phospho-alpha-D-ribose 1-diphosphate: step 1/9. With respect to regulation, feedback inhibited by histidine. Catalyzes the condensation of ATP and 5-phosphoribose 1-diphosphate to form N'-(5'-phosphoribosyl)-ATP (PR-ATP). Has a crucial role in the pathway because the rate of histidine biosynthesis seems to be controlled primarily by regulation of HisG enzymatic activity. The protein is ATP phosphoribosyltransferase of Thermodesulfovibrio yellowstonii (strain ATCC 51303 / DSM 11347 / YP87).